Reading from the N-terminus, the 479-residue chain is Ribosomal RNA small subunit methyltransferase F (479 aa).

S-adenosyl-L-methionine-binding positions include 125 to 131, E149, D176, and D194; that span reads AAAPGSK. C247 (nucleophile) is an active-site residue.

The protein belongs to the class I-like SAM-binding methyltransferase superfamily. RsmB/NOP family.

The protein localises to the cytoplasm. The enzyme catalyses cytidine(1407) in 16S rRNA + S-adenosyl-L-methionine = 5-methylcytidine(1407) in 16S rRNA + S-adenosyl-L-homocysteine + H(+). In terms of biological role, specifically methylates the cytosine at position 1407 (m5C1407) of 16S rRNA. The protein is Ribosomal RNA small subunit methyltransferase F of Shigella boydii serotype 18 (strain CDC 3083-94 / BS512).